The chain runs to 459 residues: Bifunctional protein GlmU (459 aa).

The segment at methionine 1–arginine 229 is pyrophosphorylase. Residues leucine 8–glycine 11, lysine 22, glutamine 72, and glycine 77–threonine 78 each bind UDP-N-acetyl-alpha-D-glucosamine. Aspartate 102 serves as a coordination point for Mg(2+). 4 residues coordinate UDP-N-acetyl-alpha-D-glucosamine: glycine 139, glutamate 154, asparagine 169, and asparagine 227. Asparagine 227 provides a ligand contact to Mg(2+). The linker stretch occupies residues valine 230 to asparagine 250. The segment at glycine 251–glutamine 459 is N-acetyltransferase. UDP-N-acetyl-alpha-D-glucosamine-binding residues include arginine 332 and lysine 350. Histidine 362 (proton acceptor) is an active-site residue. Residues tyrosine 365 and asparagine 376 each contribute to the UDP-N-acetyl-alpha-D-glucosamine site. Residues alanine 379, asparagine 385 to tyrosine 386, serine 404, alanine 422, and arginine 439 each bind acetyl-CoA.

In the N-terminal section; belongs to the N-acetylglucosamine-1-phosphate uridyltransferase family. This sequence in the C-terminal section; belongs to the transferase hexapeptide repeat family. As to quaternary structure, homotrimer. The cofactor is Mg(2+).

The protein resides in the cytoplasm. It catalyses the reaction alpha-D-glucosamine 1-phosphate + acetyl-CoA = N-acetyl-alpha-D-glucosamine 1-phosphate + CoA + H(+). The catalysed reaction is N-acetyl-alpha-D-glucosamine 1-phosphate + UTP + H(+) = UDP-N-acetyl-alpha-D-glucosamine + diphosphate. Its pathway is nucleotide-sugar biosynthesis; UDP-N-acetyl-alpha-D-glucosamine biosynthesis; N-acetyl-alpha-D-glucosamine 1-phosphate from alpha-D-glucosamine 6-phosphate (route II): step 2/2. It participates in nucleotide-sugar biosynthesis; UDP-N-acetyl-alpha-D-glucosamine biosynthesis; UDP-N-acetyl-alpha-D-glucosamine from N-acetyl-alpha-D-glucosamine 1-phosphate: step 1/1. The protein operates within bacterial outer membrane biogenesis; LPS lipid A biosynthesis. Functionally, catalyzes the last two sequential reactions in the de novo biosynthetic pathway for UDP-N-acetylglucosamine (UDP-GlcNAc). The C-terminal domain catalyzes the transfer of acetyl group from acetyl coenzyme A to glucosamine-1-phosphate (GlcN-1-P) to produce N-acetylglucosamine-1-phosphate (GlcNAc-1-P), which is converted into UDP-GlcNAc by the transfer of uridine 5-monophosphate (from uridine 5-triphosphate), a reaction catalyzed by the N-terminal domain. The sequence is that of Bifunctional protein GlmU from Streptococcus pneumoniae (strain 70585).